A 457-amino-acid chain; its full sequence is MDHLPIFCQLRDRDCLIVGGGDVAERKARLLLDAGARLTVNALAFIPQFTAWADAGMLTLVEGPFDESLLDTCWLAIAATDDDALNQRVSEAAEARRIFCNVVDAPKAASFIMPSIIDRSPLMVAVSSGGTSPVLARLLREKLESLLPLHLGQVAKYAGQLRGRVKQQFATMGERRRFWEKLFVNDRLAQSLANNDQKAITETTEQLINEPLDHRGEVVLVGAGPGDAGLLTLKGLQQIQQADVVVYDRLVSDDIMNLVRRDADRVFVGKRAGYHCVPQEEINQILLREAQKGKRVVRLKGGDPFIFGRGGEELETLCNAGIPFSVVPGITAASGCSAYSGIPLTHRDYAQSVRLITGHLKTGGELDWENLAAEKQTLVFYMGLNQAATIQQKLIEHDMPGEMPVAIVENGTAVTQRVIDGTLTQLGKLAQQMNSPSLIIIGRVVGLRDKLNWFSNH.

The precorrin-2 dehydrogenase /sirohydrochlorin ferrochelatase stretch occupies residues 1–204 (MDHLPIFCQL…NDQKAITETT (204 aa)). NAD(+) contacts are provided by residues 22-23 (DV) and 43-44 (LA). Ser-128 carries the post-translational modification Phosphoserine. Residues 216–457 (GEVVLVGAGP…RDKLNWFSNH (242 aa)) are uroporphyrinogen-III C-methyltransferase. S-adenosyl-L-methionine is bound at residue Pro-225. The active-site Proton acceptor is the Asp-248. Lys-270 functions as the Proton donor in the catalytic mechanism. S-adenosyl-L-methionine contacts are provided by residues 301–303 (GGD), Ile-306, 331–332 (TA), Met-382, and Gly-411.

The protein in the N-terminal section; belongs to the precorrin-2 dehydrogenase / sirohydrochlorin ferrochelatase family. This sequence in the C-terminal section; belongs to the precorrin methyltransferase family.

It carries out the reaction uroporphyrinogen III + 2 S-adenosyl-L-methionine = precorrin-2 + 2 S-adenosyl-L-homocysteine + H(+). The enzyme catalyses precorrin-2 + NAD(+) = sirohydrochlorin + NADH + 2 H(+). It catalyses the reaction siroheme + 2 H(+) = sirohydrochlorin + Fe(2+). It functions in the pathway cofactor biosynthesis; adenosylcobalamin biosynthesis; precorrin-2 from uroporphyrinogen III: step 1/1. The protein operates within cofactor biosynthesis; adenosylcobalamin biosynthesis; sirohydrochlorin from precorrin-2: step 1/1. Its pathway is porphyrin-containing compound metabolism; siroheme biosynthesis; precorrin-2 from uroporphyrinogen III: step 1/1. It participates in porphyrin-containing compound metabolism; siroheme biosynthesis; siroheme from sirohydrochlorin: step 1/1. It functions in the pathway porphyrin-containing compound metabolism; siroheme biosynthesis; sirohydrochlorin from precorrin-2: step 1/1. Its function is as follows. Multifunctional enzyme that catalyzes the SAM-dependent methylations of uroporphyrinogen III at position C-2 and C-7 to form precorrin-2 via precorrin-1. Then it catalyzes the NAD-dependent ring dehydrogenation of precorrin-2 to yield sirohydrochlorin. Finally, it catalyzes the ferrochelation of sirohydrochlorin to yield siroheme. The protein is Siroheme synthase of Shigella dysenteriae serotype 1 (strain Sd197).